Reading from the N-terminus, the 1098-residue chain is Probable arabinosyltransferase B (1098 aa).

The next 12 helical transmembrane spans lie at 28 to 50, 217 to 239, 271 to 293, 402 to 419, 434 to 456, 472 to 494, 541 to 558, 570 to 587, 597 to 619, 626 to 648, 663 to 685, and 698 to 720; these read WVAT…LPVV, LKLL…LWRL, ASWR…WHVI, LRPE…YVLI, AVVT…AALV, LVGT…TVVF, FGFL…FIML, PAWR…FLMF, GLFA…PSVL, MAFL…GWWY, IDGI…YAAW, and LIRA…VFVA.

It belongs to the emb family.

The protein resides in the cell membrane. Arabinosyl transferase responsible for the polymerization of arabinose into the arabinan of arabinogalactan. This Mycobacterium bovis (strain ATCC BAA-935 / AF2122/97) protein is Probable arabinosyltransferase B (embB).